Here is a 188-residue protein sequence, read N- to C-terminus: ATP synthase subunit b 1 (188 aa).

A helical transmembrane segment spans residues 35 to 55; the sequence is VHFSSHFFWLAISFGFFYLFI.

It belongs to the ATPase B chain family. In terms of assembly, F-type ATPases have 2 components, F(1) - the catalytic core - and F(0) - the membrane proton channel. F(1) has five subunits: alpha(3), beta(3), gamma(1), delta(1), epsilon(1). F(0) has three main subunits: a(1), b(2) and c(10-14). The alpha and beta chains form an alternating ring which encloses part of the gamma chain. F(1) is attached to F(0) by a central stalk formed by the gamma and epsilon chains, while a peripheral stalk is formed by the delta and b chains.

It localises to the cell inner membrane. Functionally, f(1)F(0) ATP synthase produces ATP from ADP in the presence of a proton or sodium gradient. F-type ATPases consist of two structural domains, F(1) containing the extramembraneous catalytic core and F(0) containing the membrane proton channel, linked together by a central stalk and a peripheral stalk. During catalysis, ATP synthesis in the catalytic domain of F(1) is coupled via a rotary mechanism of the central stalk subunits to proton translocation. Its function is as follows. Component of the F(0) channel, it forms part of the peripheral stalk, linking F(1) to F(0). The protein is ATP synthase subunit b 1 of Bartonella tribocorum (strain CIP 105476 / IBS 506).